The following is a 111-amino-acid chain: Ribonuclease P protein component (111 aa).

This sequence belongs to the RnpA family. As to quaternary structure, consists of a catalytic RNA component (M1 or rnpB) and a protein subunit.

It carries out the reaction Endonucleolytic cleavage of RNA, removing 5'-extranucleotides from tRNA precursor.. RNaseP catalyzes the removal of the 5'-leader sequence from pre-tRNA to produce the mature 5'-terminus. It can also cleave other RNA substrates such as 4.5S RNA. The protein component plays an auxiliary but essential role in vivo by binding to the 5'-leader sequence and broadening the substrate specificity of the ribozyme. This Clostridium botulinum (strain Loch Maree / Type A3) protein is Ribonuclease P protein component.